The primary structure comprises 478 residues: NADH-quinone oxidoreductase subunit N (478 aa).

Helical transmembrane passes span 7–27 (SFIP…LLIA), 46–66 (ILLV…VLTF), 74–94 (AFGD…FLFS), 109–129 (FTLG…YNLI), 163–183 (FVLG…IYGA), 204–224 (VVLS…LGAV), 237–257 (APTA…FAML), 273–293 (QSLI…ITLV), 300–320 (LLAY…IAAN), 328–348 (MFYT…IVAL), 371–391 (LALM…FVGF), 405–425 (GFTW…FYYL), and 451–471 (WAVS…SSLI).

The protein belongs to the complex I subunit 2 family. NDH-1 is composed of 14 different subunits. Subunits NuoA, H, J, K, L, M, N constitute the membrane sector of the complex.

The protein localises to the cell inner membrane. The catalysed reaction is a quinone + NADH + 5 H(+)(in) = a quinol + NAD(+) + 4 H(+)(out). Functionally, NDH-1 shuttles electrons from NADH, via FMN and iron-sulfur (Fe-S) centers, to quinones in the respiratory chain. The immediate electron acceptor for the enzyme in this species is believed to be ubiquinone. Couples the redox reaction to proton translocation (for every two electrons transferred, four hydrogen ions are translocated across the cytoplasmic membrane), and thus conserves the redox energy in a proton gradient. This chain is NADH-quinone oxidoreductase subunit N, found in Hydrogenovibrio crunogenus (strain DSM 25203 / XCL-2) (Thiomicrospira crunogena).